The primary structure comprises 349 residues: UPF0284 protein MA_3887 (349 aa).

The protein belongs to the UPF0284 family.

This is UPF0284 protein MA_3887 from Methanosarcina acetivorans (strain ATCC 35395 / DSM 2834 / JCM 12185 / C2A).